The following is a 177-amino-acid chain: MSRIGKHPVPVPAGVTVTVAGQNLTAKGKLGQLSLSLIDDIAVSMEDGKVVVQPRTETKRARQNWATARTLVFNLVKGVNDGFTKNLEINGVGYKAAVQGKDLVLNLGYSHEIRYPIPEGITIKCDKPTSVSVSGTDKQQVGQVAAEIRAFRGPEPYKGKGVKYENEVIIRKEGKKK.

It belongs to the universal ribosomal protein uL6 family. Part of the 50S ribosomal subunit.

Functionally, this protein binds to the 23S rRNA, and is important in its secondary structure. It is located near the subunit interface in the base of the L7/L12 stalk, and near the tRNA binding site of the peptidyltransferase center. This Rhodospirillum centenum (strain ATCC 51521 / SW) protein is Large ribosomal subunit protein uL6.